The primary structure comprises 297 residues: Alarmin release inhibitor (297 aa).

3 N-linked (GlcNAc...) asparagine glycosylation sites follow: N107, N175, and N190. A Sushi domain is found at 151–211; the sequence is TYDPTPNTPT…WVPTLGVCPK (61 aa). The cysteines at positions 183 and 209 are disulfide-linked.

As to quaternary structure, interacts with mouse IL33 (in reduced form).

It localises to the secreted. The protein resides in the host nucleus. Functionally, secreted protein which suppresses the host allergic response by inhibiting the interaction of host IL33 with its receptor in order to maintain parasitic infection. Binds to both host IL33 and host nuclear DNA and this dual binding blocks the interaction of IL33 with its receptor, and tethers IL33 within necrotic cells, preventing its release, and blocking allergic response initiation. In Heligmosomoides polygyrus (Parasitic roundworm), this protein is Alarmin release inhibitor.